A 522-amino-acid chain; its full sequence is Protein nucleotidyltransferase YdiU (522 aa).

Residues Gly109, Gly111, Arg112, Lys132, Asp144, Gly145, Arg195, and Arg202 each coordinate ATP. Asp271 serves as the catalytic Proton acceptor. Positions 272 and 281 each coordinate Mg(2+). Residue Asp281 coordinates ATP.

This sequence belongs to the SELO family. It depends on Mg(2+) as a cofactor. The cofactor is Mn(2+).

It carries out the reaction L-seryl-[protein] + ATP = 3-O-(5'-adenylyl)-L-seryl-[protein] + diphosphate. The catalysed reaction is L-threonyl-[protein] + ATP = 3-O-(5'-adenylyl)-L-threonyl-[protein] + diphosphate. It catalyses the reaction L-tyrosyl-[protein] + ATP = O-(5'-adenylyl)-L-tyrosyl-[protein] + diphosphate. The enzyme catalyses L-histidyl-[protein] + UTP = N(tele)-(5'-uridylyl)-L-histidyl-[protein] + diphosphate. It carries out the reaction L-seryl-[protein] + UTP = O-(5'-uridylyl)-L-seryl-[protein] + diphosphate. The catalysed reaction is L-tyrosyl-[protein] + UTP = O-(5'-uridylyl)-L-tyrosyl-[protein] + diphosphate. Nucleotidyltransferase involved in the post-translational modification of proteins. It can catalyze the addition of adenosine monophosphate (AMP) or uridine monophosphate (UMP) to a protein, resulting in modifications known as AMPylation and UMPylation. The polypeptide is Protein nucleotidyltransferase YdiU (Burkholderia ambifaria (strain ATCC BAA-244 / DSM 16087 / CCUG 44356 / LMG 19182 / AMMD) (Burkholderia cepacia (strain AMMD))).